The following is a 400-amino-acid chain: Phosphoglycerate kinase (400 aa).

Substrate contacts are provided by residues 21 to 23 (DFN), Arg36, 59 to 62 (HLGR), Arg119, and Arg160. ATP is bound by residues Lys211, Glu329, and 356-359 (GGDS).

Belongs to the phosphoglycerate kinase family. Monomer.

The protein localises to the cytoplasm. It catalyses the reaction (2R)-3-phosphoglycerate + ATP = (2R)-3-phospho-glyceroyl phosphate + ADP. It participates in carbohydrate degradation; glycolysis; pyruvate from D-glyceraldehyde 3-phosphate: step 2/5. This chain is Phosphoglycerate kinase, found in Levilactobacillus brevis (strain ATCC 367 / BCRC 12310 / CIP 105137 / JCM 1170 / LMG 11437 / NCIMB 947 / NCTC 947) (Lactobacillus brevis).